The chain runs to 139 residues: Large ribosomal subunit protein uL16 (139 aa).

Positions 1–21 are enriched in basic residues; the sequence is MLSPRKTKFRKQHRGRMRGKA. Positions 1–23 are disordered; that stretch reads MLSPRKTKFRKQHRGRMRGKATR.

This sequence belongs to the universal ribosomal protein uL16 family. In terms of assembly, part of the 50S ribosomal subunit.

Its function is as follows. Binds 23S rRNA and is also seen to make contacts with the A and possibly P site tRNAs. In Acaryochloris marina (strain MBIC 11017), this protein is Large ribosomal subunit protein uL16.